Consider the following 284-residue polypeptide: UPF0276 protein Ping_0944 (284 aa).

Belongs to the UPF0276 family.

The polypeptide is UPF0276 protein Ping_0944 (Psychromonas ingrahamii (strain DSM 17664 / CCUG 51855 / 37)).